A 109-amino-acid chain; its full sequence is uncharacterized protein (109 aa).

This is an uncharacterized protein from Microplitis demolitor bracovirus (isolate Webb) (MdBV).